The primary structure comprises 463 residues: MGTEPQLKLYNTLTREKVDFQPIDRENVRLYVCGPTVYDFAHIGNARPAIVFDVLFRLLRQVYGENHVTYARNITDVDDKINARALRDHPGLPLNEAIRLVTEKTETQYYQDTTALGCLEPTVQPRATDNIAQMIEIIEKLIARGHAYQAAGEVLFDTKSMADYGQLSKRNLDEQQAGARIAVDAHKKSPGDFVLWKLSAENEPGWESPWGRGRPGWHIECSAMSGRYLGDVFDIHGGGLDLIFPHHENEIAQSRCAHGTDVMANVWMHNGFLQVEGRKMSKSEGNFVTIYELLQTEKLGGRTWPGAVLRLAMLMTHYREPIDFSVKRLEEAERLLAKWPAADIGNAKPDATVLVALADDLNTVVAIQALHALAQAANADASILPVFAASAALLGLLPEKVEMDDAVASEIDARVRARLELLKAKNFAEADKIRDTLLAEGIQLKDGKDPATGERITTWEVKR.

Cysteine 33 provides a ligand contact to Zn(2+). The short motif at 35–45 (PTVYDFAHIGN) is the 'HIGH' region element. Cysteine 221, histidine 246, and glutamate 250 together coordinate Zn(2+). The short motif at 279–283 (KMSKS) is the 'KMSKS' region element. Residue lysine 282 participates in ATP binding.

It belongs to the class-I aminoacyl-tRNA synthetase family. In terms of assembly, monomer. Zn(2+) is required as a cofactor.

The protein localises to the cytoplasm. It carries out the reaction tRNA(Cys) + L-cysteine + ATP = L-cysteinyl-tRNA(Cys) + AMP + diphosphate. The protein is Cysteine--tRNA ligase of Rhizobium rhizogenes (strain K84 / ATCC BAA-868) (Agrobacterium radiobacter).